Consider the following 319-residue polypeptide: Protease HtpX homolog (319 aa).

Transmembrane regions (helical) follow at residues 6–26 (TAML…VIGG) and 28–48 (GGMM…YWNS). His130 is a Zn(2+) binding site. Residue Glu131 is part of the active site. Position 134 (His134) interacts with Zn(2+). Transmembrane regions (helical) follow at residues 145–165 (MTAT…FFGG) and 172–192 (PLGF…AALV). A Zn(2+)-binding site is contributed by Glu201. Positions 280 to 319 (EMSTGSTAPVRPDNAVRKSRSVPRTGWGRGGSEPPKGPWS) are disordered.

The protein belongs to the peptidase M48B family. Zn(2+) is required as a cofactor.

The protein resides in the cell inner membrane. The sequence is that of Protease HtpX homolog from Sinorhizobium medicae (strain WSM419) (Ensifer medicae).